Here is a 74-residue protein sequence, read N- to C-terminus: Small ribosomal subunit protein bS18 (74 aa).

The protein belongs to the bacterial ribosomal protein bS18 family. In terms of assembly, part of the 30S ribosomal subunit. Forms a tight heterodimer with protein bS6.

Functionally, binds as a heterodimer with protein bS6 to the central domain of the 16S rRNA, where it helps stabilize the platform of the 30S subunit. This chain is Small ribosomal subunit protein bS18, found in Zymomonas mobilis subsp. mobilis (strain ATCC 31821 / ZM4 / CP4).